The following is a 196-amino-acid chain: HTH-type transcriptional regulator EcpR (196 aa).

Residues 138 to 196 (KDIKKDKITDREMEIIRMTAQGMLPKSIARIENCSVKTVYTHRRNAEAKLYSKLYKLVQ) enclose the HTH luxR-type domain. A DNA-binding region (H-T-H motif) is located at residues 162-181 (PKSIARIENCSVKTVYTHRR).

Belongs to the EcpR/MatA family.

The protein localises to the cytoplasm. Its function is as follows. Part of the ecpRABCDE operon, which encodes the E.coli common pilus (ECP). ECP is found in both commensal and pathogenic strains and plays a dual role in early-stage biofilm development and host cell recognition. Positively regulates the expression of the ecp operon by binding to two TTCCT boxes. This Escherichia coli O157:H7 protein is HTH-type transcriptional regulator EcpR (ecpR).